Here is a 103-residue protein sequence, read N- to C-terminus: Large ribosomal subunit protein uL23c (103 aa).

Belongs to the universal ribosomal protein uL23 family. Part of the 50S ribosomal subunit.

It is found in the plastid. Its subcellular location is the chloroplast. In terms of biological role, binds to 23S rRNA. The polypeptide is Large ribosomal subunit protein uL23c (rpl23) (Gracilaria tenuistipitata var. liui (Red alga)).